Consider the following 37-residue polypeptide: Cytochrome b6-f complex subunit 5 (37 aa).

A helical transmembrane segment spans residues 5 to 25 (LLSGIVLGLIPVTLAGLFVTA).

Belongs to the PetG family. In terms of assembly, the 4 large subunits of the cytochrome b6-f complex are cytochrome b6, subunit IV (17 kDa polypeptide, PetD), cytochrome f and the Rieske protein, while the 4 small subunits are PetG, PetL, PetM and PetN. The complex functions as a dimer.

The protein resides in the plastid. Its subcellular location is the chloroplast thylakoid membrane. Functionally, component of the cytochrome b6-f complex, which mediates electron transfer between photosystem II (PSII) and photosystem I (PSI), cyclic electron flow around PSI, and state transitions. PetG is required for either the stability or assembly of the cytochrome b6-f complex. The sequence is that of Cytochrome b6-f complex subunit 5 from Chlorokybus atmophyticus (Soil alga).